A 285-amino-acid chain; its full sequence is UPF0354 protein SA1564 (285 aa).

It belongs to the UPF0354 family.

This is UPF0354 protein SA1564 from Staphylococcus aureus (strain N315).